The primary structure comprises 298 residues: ADP/ATP translocase 1 (298 aa).

Residues 1 to 7 (MSDQALS) are Mitochondrial intermembrane-facing. S2 carries the post-translational modification N-acetylserine. The Solcar 1 repeat unit spans residues 6–98 (LSFLKDFLAG…FAFKDKYKQI (93 aa)). S7 carries the phosphoserine modification. Residues 8 to 37 (FLKDFLAGGVAAAISKTAVAPIERVKLLLQ) traverse the membrane as a helical segment. Residues 38 to 74 (VQHASKQISAEKQYKGIIDCVVRIPKEQGFLSFWRGN) lie on the Mitochondrial matrix side of the membrane. Position 52 is an N6,N6,N6-trimethyllysine (K52). An N6-methyllysine modification is found at K52. Residues 75-99 (LANVIRYFPTQALNFAFKDKYKQIF) traverse the membrane as a helical segment. ADP-binding residues include R80 and K92. Residues 100 to 109 (LGGVDRHKQF) lie on the Mitochondrial intermembrane side of the membrane. The helical transmembrane segment at 110 to 130 (WRYFAGNLASGGAAGATSLCF) threads the bilayer. Solcar repeat units lie at residues 111–201 (RYFA…AKGM) and 212–297 (VSWM…IKKF). At 131–178 (VYPLDFARTRLAADVGKGAAQREFTGLGNCITKIFKSDGLRGLYQGFN) the chain is on the mitochondrial matrix side. Residue K147 is modified to N6-succinyllysine. At C160 the chain carries S-nitrosocysteine. The helical transmembrane segment at 179 to 199 (VSVQGIIIYRAAYFGVYDTAK) threads the bilayer. Residues 200–210 (GMLPDPKNVHI) lie on the Mitochondrial intermembrane side of the membrane. A helical membrane pass occupies residues 211–231 (IVSWMIAQTVTAVAGLVSYPF). Residues 232–273 (DTVRRRMMMQSGRKGADIMYTGTVDCWRKIAKDEGPKAFFKG) lie on the Mitochondrial matrix side of the membrane. R235 is an ADP binding site. Residues 235–240 (RRRMMM) are important for transport activity. The Nucleotide carrier signature motif motif lies at 235–240 (RRRMMM). N6-succinyllysine occurs at positions 245 and 272. Residues 274–291 (AWSNVLRGMGGAFVLVLY) traverse the membrane as a helical segment. Topologically, residues 292–298 (DEIKKFV) are mitochondrial intermembrane.

It belongs to the mitochondrial carrier (TC 2.A.29) family. Monomer. Found in a complex with ARL2, ARL2BP and SLC25A4/ANT1. Interacts with ARL2BP. Interacts with TIMM44; leading to inhibit the presequence translocase TIMM23, thereby promoting stabilization of PINK1. Post-translationally, under cell death induction, transglutaminated by TGM2. Transglutamination leads to formation of covalent cross-links between a glutamine and the epsilon-amino group of a lysine residue, forming polymers. As to expression, detected in heart muscle (at protein level). Detected in heart.

The protein resides in the mitochondrion inner membrane. It localises to the membrane. The enzyme catalyses ADP(in) + ATP(out) = ADP(out) + ATP(in). It catalyses the reaction H(+)(in) = H(+)(out). With respect to regulation, the matrix-open state (m-state) is inhibited by the membrane-permeable bongkrekic acid (BKA). The cytoplasmic-open state (c-state) is inhibited by the membrane-impermeable toxic inhibitor carboxyatractyloside (CATR). Proton transporter activity is inhibited by ADP:ATP antiporter activity. Its function is as follows. ADP:ATP antiporter that mediates import of ADP into the mitochondrial matrix for ATP synthesis, and export of ATP out to fuel the cell. Cycles between the cytoplasmic-open state (c-state) and the matrix-open state (m-state): operates by the alternating access mechanism with a single substrate-binding site intermittently exposed to either the cytosolic (c-state) or matrix (m-state) side of the inner mitochondrial membrane. In addition to its ADP:ATP antiporter activity, also involved in mitochondrial uncoupling and mitochondrial permeability transition pore (mPTP) activity. Plays a role in mitochondrial uncoupling by acting as a proton transporter: proton transport uncouples the proton flows via the electron transport chain and ATP synthase to reduce the efficiency of ATP production and cause mitochondrial thermogenesis. Proton transporter activity is inhibited by ADP:ATP antiporter activity, suggesting that SLC25A4/ANT1 acts as a master regulator of mitochondrial energy output by maintaining a delicate balance between ATP production (ADP:ATP antiporter activity) and thermogenesis (proton transporter activity). Proton transporter activity requires free fatty acids as cofactor, but does not transport it. Probably mediates mitochondrial uncoupling in tissues that do not express UCP1. Also plays a key role in mPTP opening, a non-specific pore that enables free passage of the mitochondrial membranes to solutes of up to 1.5 kDa, and which contributes to cell death. It is however unclear if SLC25A4/ANT1 constitutes a pore-forming component of mPTP or regulates it. Acts as a regulator of mitophagy independently of ADP:ATP antiporter activity: promotes mitophagy via interaction with TIMM44, leading to inhibit the presequence translocase TIMM23, thereby promoting stabilization of PINK1. This Bos taurus (Bovine) protein is ADP/ATP translocase 1.